An 89-amino-acid polypeptide reads, in one-letter code: Small ribosomal subunit protein uS15 (89 aa).

The protein belongs to the universal ribosomal protein uS15 family. As to quaternary structure, part of the 30S ribosomal subunit. Forms a bridge to the 50S subunit in the 70S ribosome, contacting the 23S rRNA.

Functionally, one of the primary rRNA binding proteins, it binds directly to 16S rRNA where it helps nucleate assembly of the platform of the 30S subunit by binding and bridging several RNA helices of the 16S rRNA. Its function is as follows. Forms an intersubunit bridge (bridge B4) with the 23S rRNA of the 50S subunit in the ribosome. The polypeptide is Small ribosomal subunit protein uS15 (Herminiimonas arsenicoxydans).